The primary structure comprises 317 residues: Flagellar hook-associated protein 3 (317 aa).

It belongs to the bacterial flagellin family.

The protein localises to the secreted. The protein resides in the bacterial flagellum. The sequence is that of Flagellar hook-associated protein 3 (flgL) from Salmonella typhimurium (strain LT2 / SGSC1412 / ATCC 700720).